The primary structure comprises 344 residues: UDP-N-acetylglucosamine--N-acetylmuramyl-(pentapeptide) pyrophosphoryl-undecaprenol N-acetylglucosamine transferase (344 aa).

Residues 9-11 (TGG), N118, R157, S188, and Q282 contribute to the UDP-N-acetyl-alpha-D-glucosamine site.

This sequence belongs to the glycosyltransferase 28 family. MurG subfamily.

The protein resides in the cell inner membrane. The enzyme catalyses di-trans,octa-cis-undecaprenyl diphospho-N-acetyl-alpha-D-muramoyl-L-alanyl-D-glutamyl-meso-2,6-diaminopimeloyl-D-alanyl-D-alanine + UDP-N-acetyl-alpha-D-glucosamine = di-trans,octa-cis-undecaprenyl diphospho-[N-acetyl-alpha-D-glucosaminyl-(1-&gt;4)]-N-acetyl-alpha-D-muramoyl-L-alanyl-D-glutamyl-meso-2,6-diaminopimeloyl-D-alanyl-D-alanine + UDP + H(+). The protein operates within cell wall biogenesis; peptidoglycan biosynthesis. Its function is as follows. Cell wall formation. Catalyzes the transfer of a GlcNAc subunit on undecaprenyl-pyrophosphoryl-MurNAc-pentapeptide (lipid intermediate I) to form undecaprenyl-pyrophosphoryl-MurNAc-(pentapeptide)GlcNAc (lipid intermediate II). The protein is UDP-N-acetylglucosamine--N-acetylmuramyl-(pentapeptide) pyrophosphoryl-undecaprenol N-acetylglucosamine transferase of Aquifex aeolicus (strain VF5).